Here is a 208-residue protein sequence, read N- to C-terminus: Vacuolar ATPase assembly protein VMA12 (208 aa).

Alanine 2 is subject to N-acetylalanine. Helical transmembrane passes span 146–166 and 179–199; these read LVIT…CTYL and VLAA…VMVR.

As to quaternary structure, accessory component of the multisubunit proton-transporting vacuolar (V)-ATPase protein pump.

Its subcellular location is the cytoplasmic vesicle. It is found in the COPI-coated vesicle membrane. The protein localises to the endoplasmic reticulum-Golgi intermediate compartment membrane. It localises to the endoplasmic reticulum membrane. Its function is as follows. Accessory component of the proton-transporting vacuolar (V)-ATPase protein pump involved in intracellular iron homeostasis. In aerobic conditions, required for intracellular iron homeostasis, thus triggering the activity of Fe(2+) prolyl hydroxylase (PHD) enzymes, and leading to HIF1A hydroxylation and subsequent proteasomal degradation. Necessary for endolysosomal acidification and lysosomal degradation. May be involved in Golgi homeostasis. Binds 20(S)-hydroxycholesterol (20(S)-OHC). The chain is Vacuolar ATPase assembly protein VMA12 from Homo sapiens (Human).